A 239-amino-acid chain; its full sequence is Pyridoxine 5'-phosphate synthase (239 aa).

Position 7 (Asn7) interacts with 3-amino-2-oxopropyl phosphate. 9-10 provides a ligand contact to 1-deoxy-D-xylulose 5-phosphate; it reads DH. Arg18 contributes to the 3-amino-2-oxopropyl phosphate binding site. Residue His43 is the Proton acceptor of the active site. Arg45 and His50 together coordinate 1-deoxy-D-xylulose 5-phosphate. Glu70 functions as the Proton acceptor in the catalytic mechanism. Thr100 provides a ligand contact to 1-deoxy-D-xylulose 5-phosphate. His191 functions as the Proton donor in the catalytic mechanism. 3-amino-2-oxopropyl phosphate is bound by residues Gly192 and 213–214; that span reads GH.

This sequence belongs to the PNP synthase family. As to quaternary structure, homooctamer; tetramer of dimers.

The protein localises to the cytoplasm. The catalysed reaction is 3-amino-2-oxopropyl phosphate + 1-deoxy-D-xylulose 5-phosphate = pyridoxine 5'-phosphate + phosphate + 2 H2O + H(+). It functions in the pathway cofactor biosynthesis; pyridoxine 5'-phosphate biosynthesis; pyridoxine 5'-phosphate from D-erythrose 4-phosphate: step 5/5. Its function is as follows. Catalyzes the complicated ring closure reaction between the two acyclic compounds 1-deoxy-D-xylulose-5-phosphate (DXP) and 3-amino-2-oxopropyl phosphate (1-amino-acetone-3-phosphate or AAP) to form pyridoxine 5'-phosphate (PNP) and inorganic phosphate. This is Pyridoxine 5'-phosphate synthase from Geotalea daltonii (strain DSM 22248 / JCM 15807 / FRC-32) (Geobacter daltonii).